A 198-amino-acid chain; its full sequence is Integrator complex subunit 8-like protein (198 aa).

It belongs to the Integrator subunit 8 family. As to quaternary structure, component of the Integrator complex. The core complex associates with protein phosphatase 2A subunits, to form the Integrator-PP2A (INTAC) complex.

It is found in the nucleus. The protein resides in the chromosome. In terms of biological role, component of the integrator complex, a multiprotein complex that terminates RNA polymerase II (Pol II) transcription in the promoter-proximal region of genes. The integrator complex provides a quality checkpoint during transcription elongation by driving premature transcription termination of transcripts that are unfavorably configured for transcriptional elongation: the complex terminates transcription by (1) catalyzing dephosphorylation of the C-terminal domain (CTD) of Pol II subunit polr2a, (2) degrading the exiting nascent RNA transcript via endonuclease activity and (3) promoting the release of Pol II from bound DNA. The integrator complex is also involved in terminating the synthesis of non-coding Pol II transcripts, such as enhancer RNAs (eRNAs), small nuclear RNAs (snRNAs), telomerase RNAs and long non-coding RNAs (lncRNAs). Within the integrator complex, INTS8 is required for the recruitment of protein phosphatase 2A (PP2A) to transcription pause-release checkpoint. This Dictyostelium discoideum (Social amoeba) protein is Integrator complex subunit 8-like protein.